Here is a 299-residue protein sequence, read N- to C-terminus: ATP phosphoribosyltransferase (299 aa).

Belongs to the ATP phosphoribosyltransferase family. Long subfamily. Mg(2+) is required as a cofactor.

The protein resides in the cytoplasm. The catalysed reaction is 1-(5-phospho-beta-D-ribosyl)-ATP + diphosphate = 5-phospho-alpha-D-ribose 1-diphosphate + ATP. It functions in the pathway amino-acid biosynthesis; L-histidine biosynthesis; L-histidine from 5-phospho-alpha-D-ribose 1-diphosphate: step 1/9. Its activity is regulated as follows. Feedback inhibited by histidine. Its function is as follows. Catalyzes the condensation of ATP and 5-phosphoribose 1-diphosphate to form N'-(5'-phosphoribosyl)-ATP (PR-ATP). Has a crucial role in the pathway because the rate of histidine biosynthesis seems to be controlled primarily by regulation of HisG enzymatic activity. The chain is ATP phosphoribosyltransferase from Baumannia cicadellinicola subsp. Homalodisca coagulata.